The following is a 126-amino-acid chain: Protein ApaG (126 aa).

The 125-residue stretch at 2-126 (SDPRYQIDVS…FRLAVPGALH (125 aa)) folds into the ApaG domain.

This Pseudomonas fluorescens (strain SBW25) protein is Protein ApaG.